The primary structure comprises 218 residues: Thiopurine S-methyltransferase (218 aa).

Trp-11, Leu-46, Glu-67, and Arg-122 together coordinate S-adenosyl-L-methionine.

This sequence belongs to the class I-like SAM-binding methyltransferase superfamily. TPMT family.

Its subcellular location is the cytoplasm. The catalysed reaction is S-adenosyl-L-methionine + a thiopurine = S-adenosyl-L-homocysteine + a thiopurine S-methylether.. The sequence is that of Thiopurine S-methyltransferase from Vibrio cholerae serotype O1 (strain ATCC 39541 / Classical Ogawa 395 / O395).